The sequence spans 95 residues: Large ribosomal subunit protein bL21 (95 aa).

The protein belongs to the bacterial ribosomal protein bL21 family. As to quaternary structure, part of the 50S ribosomal subunit. Contacts protein L20.

This protein binds to 23S rRNA in the presence of protein L20. This chain is Large ribosomal subunit protein bL21, found in Prosthecochloris vibrioformis (Chlorobium vibrioforme).